We begin with the raw amino-acid sequence, 72 residues long: Hypotensin-1 (72 aa).

The first 24 residues, 1–24 (MKMMIPVIFSILLLIFSLSSTAMS), serve as a signal peptide directing secretion. Positions 25–35 (LEDEQENMEER) are excised as a propeptide. At Ser-41 the chain carries Phosphoserine. The segment at 53-72 (ETNAKPPARFDPAAFEKSDD) is disordered. A propeptide spanning residues 61-72 (RFDPAAFEKSDD) is cleaved from the precursor.

The protein belongs to the non-disulfide-bridged peptide (NDBP) superfamily. Undergoes enzymatic cleavages by carboxypeptidases, endopeptidases, and aminopeptidases resulting in at least 46 fragments of this protein. In terms of tissue distribution, expressed by the venom gland.

It localises to the secreted. Agonist of the B2 bradykinin receptor (BDKRB2). Potentiates the hypotensive effect of bradykinin (BK) and induces a direct vasorelaxing effect independent of BK, by endothelium- and nitric oxide (NO)-dependent mechanisms in rat aortic ring preparations. Also exerts proangiogenic, antiinflammatory, and antifibrogenic activities. Does not inhibit the angiotensin-converting enzyme (ACE) but increases its activity, and inhibits neprilysin (NEP) in a non-competitive manner. Exerts intermediate cytotoxicity and pro-inflammatory effects on mouse macrophages, and increases the phagocytic activity of these murine cells. Functionally, presents moderate hemolytic activity at physiological concentrations (micromolar range). Does not induce mast cell degranulation, lactate dehydrogenase (LDH) release from mast cells and antimicrobial effects. In vivo, causes intense pain (but no edema formation), when injected in mice hind paws. Also induces discomfort and anxiety in mice, as it moderately diminishes locomotion and moderately increases rearing behavior. This chain is Hypotensin-1, found in Tityus serrulatus (Brazilian scorpion).